We begin with the raw amino-acid sequence, 145 residues long: 3-dehydroquinate dehydratase (145 aa).

Residue Y23 is the Proton acceptor of the active site. The substrate site is built by N75, H81, and D88. The Proton donor role is filled by H101. Substrate contacts are provided by residues 102-103 and R112; that span reads LS.

The protein belongs to the type-II 3-dehydroquinase family. As to quaternary structure, homododecamer.

The enzyme catalyses 3-dehydroquinate = 3-dehydroshikimate + H2O. It functions in the pathway metabolic intermediate biosynthesis; chorismate biosynthesis; chorismate from D-erythrose 4-phosphate and phosphoenolpyruvate: step 3/7. In terms of biological role, catalyzes a trans-dehydration via an enolate intermediate. This is 3-dehydroquinate dehydratase from Legionella pneumophila (strain Paris).